The sequence spans 29 residues: Galanin (29 aa).

Alanine amide is present on alanine 29.

Belongs to the galanin family.

The protein resides in the secreted. In terms of biological role, contracts smooth muscle of the gastrointestinal and genitourinary tract, regulates growth hormone release, modulates insulin release, and may be involved in the control of adrenal secretion. This chain is Galanin (GAL), found in Alligator mississippiensis (American alligator).